The following is a 604-amino-acid chain: MRRCLNTRPGETGMDVTSRCTLGDPNKLPEGVPQPARMPYVSDKHPRQTLEVINLLRKHRELCDVVLVVGAKKIYAHRVILSACSPYFRAMFTGELAESRQTEVVIRDIDERAMELLIDFSYTSQITVEEGNVQTLLPAACLLQLAEIQEACCEFLKRQLDPSNCLGIRAFADTHSCRELLRIADKFTQHNFQEVMESEEFMLLPANQLIDIISSDELNVRSEEQVFNAVMAWVKYSIQERRPQLPQVLQHVRLPLLSPKFLVGTVGSDPLIKSDEECRDLVDEAKNYLLLPQERPLMQGPRTRPRKPIRCGEVLFAVGGWCSGDAISSVERYDPQTNEWRMVASMSKRRCGVGVSVLDDLLYAVGGHDGSSYLNSVERYDPKTNQWSSDVAPTSTCRTSVGVAVLGGYLYAVGGQDGVSCLNIVERYDPKENKWTRVASMSTRRLGVAVAVLGGFLYAVGGSDGTSPLNTVERYNPQENRWHTIAPMGTRRKHLGCAVYQDMIYAVGGRDDTTELSSAERYNPRTNQWSPVVAMTSRRSGVGLAVVNGQLMAVGGFDGTTYLKTIEVFDPDANTWRLYGGMNYRRLGGGVGVIKMTHCESHIW.

The BTB domain maps to Cys63–Glu130. In terms of domain architecture, BACK spans Cys165 to Gly267. 6 Kelch repeats span residues Val314–Asp360, Leu362–Gly408, Tyr409–Gly455, Leu457–Asp502, Ile504–Gly549, and Leu551–Met596.

Component of the BCR(KLHL20) E3 ubiquitin ligase complex, at least composed of cul3, klhl20 and rbx1.

The protein localises to the cytoplasm. It localises to the perinuclear region. Its subcellular location is the nucleus. The protein operates within protein modification; protein ubiquitination. Its function is as follows. Substrate-specific adapter of a BCR (BTB-CUL3-RBX1) E3 ubiquitin-protein ligase complex involved in interferon response and anterograde Golgi to endosome transport. The BCR(KLHL20) E3 ubiquitin ligase complex mediates the ubiquitination of target proteins, leading to their degradation by the proteasome. It also specifically mediates 'Lys-33'-linked ubiquitination. The polypeptide is Kelch-like protein 20 (klhl20) (Xenopus laevis (African clawed frog)).